The sequence spans 268 residues: Homeobox protein CDX-1 (268 aa).

The segment at 1 to 152 is disordered; that stretch reads MYVGYVLDKD…AGGGGSGKTR (152 aa). Composition is skewed to pro residues over residues 29–42 and 54–67; these read TYAPPGPAPAPPQY and APAPPPTWAAPFPA. The span at 73–91 shows a compositional bias: low complexity; sequence AAAYGPGPTASAASPAPLA. The span at 92-108 shows a compositional bias: pro residues; that stretch reads FGPPPDFSPVPAPPGPG. Low complexity predominate over residues 115 to 128; the sequence is SLGAPGAPSSPGAP. Residues 154 to 213 constitute a DNA-binding region (homeobox); sequence KDKYRVVYTDHQRLELEKEFHYSRYITIRRKSELAANLGLTERQVKIWFQNRRAKERKVN. Positions 157-178 are interaction with DNA; sequence YRVVYTDHQRLELEKEFHYSRY. The interval 196 to 207 is interaction with 5-mCpG DNA; sequence RQVKIWFQNRRA. A disordered region spans residues 209-268; sequence ERKVNKKKQQQQQPLPPTQLPLPLDGTPTPSGPPLGSLCPTNAGLLGTPSPVPVKEEFLP. Residues 229–246 show a composition bias toward low complexity; the sequence is PLPLDGTPTPSGPPLGSL.

Belongs to the Caudal homeobox family. In terms of tissue distribution, intestinal epithelium.

It is found in the nucleus. In terms of biological role, plays a role in transcriptional regulation. Involved in activated KRAS-mediated transcriptional activation of PRKD1 in colorectal cancer (CRC) cells. Binds to the PRKD1 promoter in colorectal cancer (CRC) cells. Could play a role in the terminal differentiation of the intestine. Binds preferentially to methylated DNA. This Mus musculus (Mouse) protein is Homeobox protein CDX-1 (Cdx1).